Consider the following 291-residue polypeptide: Lipase (291 aa).

Positions 1–17 (MRSSLVLFFVSAWTALA) are cleaved as a signal peptide. Positions 18–22 (SPIRR) are excised as a propeptide. Disulfide bonds link C44-C290, C58-C63, and C126-C129. S168 acts as the Nucleophile in catalysis. Active-site charge relay system residues include D223 and H280.

The protein belongs to the AB hydrolase superfamily. Lipase family.

It carries out the reaction a triacylglycerol + H2O = a diacylglycerol + a fatty acid + H(+). In Thermomyces lanuginosus (Humicola lanuginosa), this protein is Lipase (LIP).